The following is a 301-amino-acid chain: Probable alpha-L-glutamate ligase (301 aa).

In terms of domain architecture, ATP-grasp spans 104–287; the sequence is LQLLSRKGIG…VAGMIYEFIE (184 aa). Residues K141, 178–179, D187, and 211–213 contribute to the ATP site; these read EF and RSN. Positions 248, 260, and 262 each coordinate Mg(2+). D248, E260, and N262 together coordinate Mn(2+).

It belongs to the RimK family. Requires Mg(2+) as cofactor. Mn(2+) serves as cofactor.

This Vibrio vulnificus (strain CMCP6) protein is Probable alpha-L-glutamate ligase.